The following is a 276-amino-acid chain: Insulin-induced gene 1 protein (276 aa).

2 disordered regions span residues 1–26 and 49–73; these read MPRLDDHLWRGPCAKGTKHRSHPRAS and AAHGALGTDPAHGPQSAGVGGQGSS. Residues 1–83 lie on the Cytoplasmic side of the membrane; that stretch reads MPRLDDHLWR…SHVNSWHHHL (83 aa). Residues 16–25 are compositionally biased toward basic residues; it reads GTKHRSHPRA. Residues 84-106 traverse the membrane as a helical segment; the sequence is VQRSLVLFSVGVVLALVLNLLQV. The Extracellular segment spans residues 107–125; it reads QRNVTLFPDEVIATIFSSA. Residues 126 to 143 traverse the membrane as a helical segment; it reads WWVPPCCGTAAAVVGLLY. Residues 144-158 are Cytoplasmic-facing; sequence PCIDSHLGEPHKFKR. Glycyl lysine isopeptide (Lys-Gly) (interchain with G-Cter in ubiquitin) cross-links involve residues Lys155 and Lys157. The chain crosses the membrane as a helical span at residues 159-181; it reads EWASVMRCVAVFVGINHASAKLD. The Extracellular segment spans residues 182–184; it reads FAN. A helical transmembrane segment spans residues 185 to 203; it reads NVQLSLTLAALSLGLWWTF. The Cytoplasmic portion of the chain corresponds to 204-208; that stretch reads DRSRS. At Ser206 the chain carries Phosphoserine. Residues 209 to 230 traverse the membrane as a helical segment; the sequence is GLGLGITIAFLATLITQLLVYN. Over 231-244 the chain is Extracellular; the sequence is GVYQYTSPDFLYIR. The chain crosses the membrane as a helical span at residues 245–262; the sequence is SWLPCIFFSGGVTVGNIG. At 263–276 the chain is on the cytoplasmic side; it reads RQLAMGVPEKPHSD. Residues 270 to 276 carry the KxHxx motif; the sequence is PEKPHSD.

The protein belongs to the INSIG family. In terms of assembly, interacts with SCAP; interaction is direct and only takes place in the presence of sterols; it prevents interaction between SCAP and the coat protein complex II (COPII). Associates with the SCAP-SREBP complex (composed of SCAP and SREBF1/SREBP1 or SREBF2/SREBP2); association is mediated via its interaction with SCAP and only takes place in the presence of sterols. Interaction with SCAP is mutually exclusive with PAQR3. Interacts with HMGCR (via its SSD); the interaction, accelerated by sterols, leads to the recruitment of HMGCR to AMFR/gp78 for its ubiquitination by the sterol-mediated ERAD pathway. Interacts with AMFR/gp78 (via its membrane domain); the interaction recruits HMCR at the ER membrane for its ubiquitination and degradation by the sterol-mediated ERAD pathway. Interacts with SOAT2/ACAT2; leading to promote recruitment of AMFR/gp78 and subsequent ubiquitination of SOAT2/ACAT2. Interacts with RNF139. Interacts with RNF145. Phosphorylation at Ser-206 by PCK1 reduces binding to oxysterol, disrupting the interaction between INSIG1 and SCAP, thereby promoting nuclear translocation of SREBP proteins (SREBF1/SREBP1 or SREBF2/SREBP2) and subsequent transcription of downstream lipogenesis-related genes. Post-translationally, ubiquitinated by AMFR/gp78 in response to sterol deprivation, leading to its degradation: when the SCAP-SREBP complex becomes dissociated from INSIG1, INSIG1 is then ubiquitinated and degraded in proteasomes. Although ubiquitination is required for rapid INSIG1 degradation, it is not required for release of the SCAP-SREBP complex. Ubiquitinated by RNF139.

The protein resides in the endoplasmic reticulum membrane. Oxysterol-binding protein that mediates feedback control of cholesterol synthesis by controlling both endoplasmic reticulum to Golgi transport of SCAP and degradation of HMGCR. Acts as a negative regulator of cholesterol biosynthesis by mediating the retention of the SCAP-SREBP complex in the endoplasmic reticulum, thereby blocking the processing of sterol regulatory element-binding proteins (SREBPs) SREBF1/SREBP1 and SREBF2/SREBP2. Binds oxysterol, including 25-hydroxycholesterol, regulating interaction with SCAP and retention of the SCAP-SREBP complex in the endoplasmic reticulum. In presence of oxysterol, interacts with SCAP, retaining the SCAP-SREBP complex in the endoplasmic reticulum, thereby preventing SCAP from escorting SREBF1/SREBP1 and SREBF2/SREBP2 to the Golgi. Sterol deprivation or phosphorylation by PCK1 reduce oxysterol-binding, disrupting the interaction between INSIG1 and SCAP, thereby promoting Golgi transport of the SCAP-SREBP complex, followed by processing and nuclear translocation of SREBF1/SREBP1 and SREBF2/SREBP2. Also regulates cholesterol synthesis by regulating degradation of HMGCR: initiates the sterol-mediated ubiquitin-mediated endoplasmic reticulum-associated degradation (ERAD) of HMGCR via recruitment of the reductase to the ubiquitin ligases AMFR/gp78 and/or RNF139. Also regulates degradation of SOAT2/ACAT2 when the lipid levels are low: initiates the ubiquitin-mediated degradation of SOAT2/ACAT2 via recruitment of the ubiquitin ligases AMFR/gp78. The chain is Insulin-induced gene 1 protein from Bos taurus (Bovine).